A 300-amino-acid chain; its full sequence is Folate-binding protein 1 (300 aa).

The first 28 residues, 1 to 28, serve as a signal peptide directing secretion; sequence MGRCLTKKVFLIQSPILFLHLLISLSSG. 5 disulfides stabilise this stretch: cysteine 38-cysteine 76, cysteine 68-cysteine 111, cysteine 77-cysteine 114, cysteine 102-cysteine 139, and cysteine 132-cysteine 178. Residue asparagine 173 is glycosylated (N-linked (GlcNAc...) asparagine). The helical transmembrane segment at 238 to 258 threads the bilayer; sequence MTTIQKISLGMSFLIAGMFLI.

The protein belongs to the folate receptor family. In terms of tissue distribution, expressed in leaves.

It is found in the membrane. In terms of biological role, folic acid-binding protein involved in salicylic acid- (SA-) induced folate accumulation by triggering uptake and accumulation of folic acid in cells. May be implicated in the transport of the folates from the site of production (leaves) to the site of storage (fruits and seeds) and utilization (roots). This Arabidopsis thaliana (Mouse-ear cress) protein is Folate-binding protein 1.